The following is a 347-amino-acid chain: MLSNSEIKPSENSQKTKVLLTKANNASNERAPPPLSHFIAGGVAGMLGAIATAPLDVVKTRLQSDFYKDRFLKQTAKSKSPLTAAYRHFMDTCIILKNVKVHEGTRALFRGLGPNLIGTIPARSINFFSYGNGKRILADLFNNGQENSQIHLMAAAIAGVITSAATNPIWLVKTRLQLDKKSGQAAQYRSSIDCIIKTIRLEGFRGLYKGLSASLLGVGESTLQWVLYEKFKHAVAIRQLRRKELGIQETIYDKVLDWGGKLGGAGIAKFMAAGIAYPHEVVRTRLRQSPSINGTPKYTGLIQCFKLVWMEQGIVGLYGGLTAHLLRVVPNACILFGSYEVIMHFIG.

Solcar repeat units follow at residues 32–136, 146–234, and 256–345; these read PPPL…GKRI, ENSQ…FKHA, and LDWG…IMHF. Helical transmembrane passes span 38–58, 105–125, 152–172, 214–233, 262–282, and 317–338; these read FIAG…LDVV, TRAL…ARSI, LMAA…IWLV, SLLG…KFKH, LGGA…HEVV, and LYGG…LFGS.

The protein localises to the mitochondrion inner membrane. It catalyses the reaction 5-methyl-UTP(out) + UTP(in) = 5-methyl-UTP(in) + UTP(out). Functionally, mitochondrial transporter that imports/exports pyrimidine nucleotides into and from mitochondria. Selectively transports uridine, thymidine, and cytosine (deoxy)nucleoside di- and triphosphates by an antiport mechanism. Also transports, with lower efficiency, uridine, thymidine, and cytosine (deoxy)nucleoside monophosphates as well as guanosine (deoxy)nucleoside di- and triphosphate. May import (deoxy)nucleoside triphosphates in exchange for intramitochondrial (deoxy)nucleoside monophosphates, thus providing precursors necessary for de novo synthesis of mitochondrial DNA and RNA while exporting products of their catabolism. Mediates the transport of iron and other divalent metal ions like copper and zinc across the mitochondrial inner membrane in a pyrimidine nucleotide-dependent fashion. Catalyzes the co-import of pyrimidine nucleotides and divalent metal ions including ferrous iron. Participates in mitochondrial genome maintenance, regulation of mitochondrial membrane potential and mitochondrial respiration. This chain is Mitochondrial carrier protein rim2 (rim2), found in Schizosaccharomyces pombe (strain 972 / ATCC 24843) (Fission yeast).